The following is a 386-amino-acid chain: Flap endonuclease 1 (386 aa).

Residues 1 to 104 are N-domain; sequence MGILGLSKLI…GELAKRAERR (104 aa). Asp34 lines the Mg(2+) pocket. The DNA site is built by Arg47 and Arg70. Asp86, Glu158, Glu160, Asp179, and Asp181 together coordinate Mg(2+). Residues 122–253 are I-domain; the sequence is EIEKFNRRLV…KRAIELINNY (132 aa). Glu158 contacts DNA. Positions 231 and 233 each coordinate DNA. Mg(2+) is bound at residue Asp233. Residues 336–344 are interaction with PCNA; that stretch reads TQVRLDSFF. A disordered region spans residues 354–386; that stretch reads VNAAKRKAEEAKKSANNKKAKTSGGAARGRRPK.

Belongs to the XPG/RAD2 endonuclease family. FEN1 subfamily. As to quaternary structure, interacts with PCNA. Three molecules of FEN1 bind to one PCNA trimer with each molecule binding to one PCNA monomer. PCNA stimulates the nuclease activity without altering cleavage specificity. Mg(2+) serves as cofactor. Post-translationally, phosphorylated. Phosphorylation upon DNA damage induces relocalization to the nuclear plasma.

It is found in the nucleus. The protein localises to the nucleolus. The protein resides in the nucleoplasm. It localises to the mitochondrion. Functionally, structure-specific nuclease with 5'-flap endonuclease and 5'-3' exonuclease activities involved in DNA replication and repair. During DNA replication, cleaves the 5'-overhanging flap structure that is generated by displacement synthesis when DNA polymerase encounters the 5'-end of a downstream Okazaki fragment. It enters the flap from the 5'-end and then tracks to cleave the flap base, leaving a nick for ligation. Also involved in the long patch base excision repair (LP-BER) pathway, by cleaving within the apurinic/apyrimidinic (AP) site-terminated flap. Acts as a genome stabilization factor that prevents flaps from equilibrating into structures that lead to duplications and deletions. Also possesses 5'-3' exonuclease activity on nicked or gapped double-stranded DNA, and exhibits RNase H activity. Also involved in replication and repair of rDNA and in repairing mitochondrial DNA. The sequence is that of Flap endonuclease 1 from Drosophila pseudoobscura pseudoobscura (Fruit fly).